Reading from the N-terminus, the 283-residue chain is Diaminopimelate epimerase (283 aa).

Residues Asn13, Gln45, and Asn65 each coordinate substrate. The Proton donor role is filled by Cys74. Residues 75-76, Asn156, Asn190, and 208-209 contribute to the substrate site; these read GN and ER. The Proton acceptor role is filled by Cys217. 218 to 219 is a substrate binding site; the sequence is GS.

Belongs to the diaminopimelate epimerase family. Homodimer.

The protein resides in the cytoplasm. It carries out the reaction (2S,6S)-2,6-diaminopimelate = meso-2,6-diaminopimelate. The protein operates within amino-acid biosynthesis; L-lysine biosynthesis via DAP pathway; DL-2,6-diaminopimelate from LL-2,6-diaminopimelate: step 1/1. Catalyzes the stereoinversion of LL-2,6-diaminopimelate (L,L-DAP) to meso-diaminopimelate (meso-DAP), a precursor of L-lysine and an essential component of the bacterial peptidoglycan. The chain is Diaminopimelate epimerase from Bartonella quintana (strain Toulouse) (Rochalimaea quintana).